A 390-amino-acid chain; its full sequence is Protein PIN-LIKES 3 (390 aa).

Over 1–14 the chain is Lumenal; it reads MVKLLELFITSSKP. Residues 15 to 35 traverse the membrane as a helical segment; that stretch reads VVEILLITSVGFYMALDGVNL. Over 36–43 the chain is Cytoplasmic; that stretch reads LGHDARKY. Residues 44–61 form a helical membrane-spanning segment; that stretch reads LNNIVFYVFSPSLIGSRL. The Lumenal portion of the chain corresponds to 62 to 76; it reads ADSVTYESLVKMWFM. A helical membrane pass occupies residues 77-97; the sequence is PVNVLLTFIIGSLLGWIVIVI. Residues 98-107 lie on the Cytoplasmic side of the membrane; the sequence is TKPPSHLRGL. Residues 108 to 128 traverse the membrane as a helical segment; the sequence is ILGCCAAGNLGNMPLIIIPAV. The Lumenal segment spans residues 129 to 144; that stretch reads CKEKGGPFGDPESCQK. A helical transmembrane segment spans residues 145–165; it reads YGMGYVALSMAMGSIYIWTYV. The Cytoplasmic portion of the chain corresponds to 166-227; the sequence is YNLMRVLSNS…SLSQKVNLKT (62 aa). A helical membrane pass occupies residues 228–248; that stretch reads IFAPSTIAAMIALVIGLITPL. Topologically, residues 249-265 are lumenal; that stretch reads RKLIIGTEAPLRVLQDS. The helical transmembrane segment at 266-286 threads the bilayer; it reads VTLVGDGAVPAMTMIIGGNLL. Topologically, residues 287–297 are cytoplasmic; that stretch reads KGLRSSGMKMS. Residues 298-318 traverse the membrane as a helical segment; it reads SIIGVLVARYVLLPMSGVLIV. Topologically, residues 319-331 are lumenal; the sequence is RGAYKLDLVTSEP. Residues 332 to 352 form a helical membrane-spanning segment; that stretch reads LYQFVLLLQYAVPPAMNLGTI. Topologically, residues 353–364 are cytoplasmic; sequence TQLFGTGESECS. The chain crosses the membrane as a helical span at residues 365–385; the sequence is VIMLWTYSLASIALTVWPTFF. At 386 to 390 the chain is on the lumenal side; it reads MWLVA.

Belongs to the auxin efflux carrier (TC 2.A.69.2) family. Expressed in seedlings, rosette and cauline leaves, flowers and siliques.

The protein localises to the endoplasmic reticulum membrane. Its function is as follows. Involved in cellular auxin homeostasis by regulating auxin metabolism. Regulates intracellular auxin accumulation at the endoplasmic reticulum and thus auxin availability for nuclear auxin signaling. The sequence is that of Protein PIN-LIKES 3 (PILS3) from Arabidopsis thaliana (Mouse-ear cress).